The sequence spans 452 residues: ADP-dependent glucose/glucosamine kinase (452 aa).

The ADPK domain maps to 1–452; sequence MSWDEMYRDA…AFVSEFSLSS (452 aa). D-glucose is bound by residues aspartate 33, glutamate 87, 111–112, and histidine 174; that span reads GQ. Glutamate 264 lines the Mg(2+) pocket. Asparagine 290 lines the ADP pocket. Glutamate 293 contributes to the Mg(2+) binding site. Residues 339-340, valine 426, and glycine 436 contribute to the ADP site; that span reads HT. Residue aspartate 437 coordinates D-glucose. Residue aspartate 437 coordinates Mg(2+). Aspartate 437 acts as the Proton acceptor in catalysis.

Belongs to the ADP-dependent glucokinase family. It depends on Mg(2+) as a cofactor.

It localises to the cytoplasm. It catalyses the reaction D-glucose + ADP = D-glucose 6-phosphate + AMP + H(+). The catalysed reaction is D-glucosamine + ADP = D-glucosamine 6-phosphate + AMP + H(+). It functions in the pathway carbohydrate degradation; glycolysis. Catalyzes the ADP-dependent phosphorylation of D-glucose to D-glucose 6-phosphate and glucosamine to glucosamine 6-phosphate. The sequence is that of ADP-dependent glucose/glucosamine kinase from Pyrococcus abyssi (strain GE5 / Orsay).